The following is a 776-amino-acid chain: Intermediate filament protein ifp-1 (776 aa).

A head region spans residues 1–23 (MDSANARDCLLHLARAKLSERQD). The 352-residue stretch at 20–371 (ERQDLVQLND…ELLDRSGDPR (352 aa)) folds into the IF rod domain. Positions 24–55 (LVQLNDQFVDIIEHVHYMEAEHTALEHDYNLL) are coil 1A. Residues 56–69 (KSGVQSDSSGINEI) form a linker 1 region. The interval 70–207 (YNVEIRTVRS…EDNKKIIMNE (138 aa)) is coil 1B. Residues 208–224 (HKYFVRDRNADRHVFRD) form a linker 12 region. A coil 2 region spans residues 225 to 620 (QLRKAIADIR…QRGPHHSSYH (396 aa)). Disordered stretches follow at residues 453 to 473 (ASPIRPSYTPYQQESRADSRS) and 518 to 544 (NTTQINNPYASRTPTSSVNDRIASERR). The span at 518-536 (NTTQINNPYASRTPTSSVN) shows a compositional bias: polar residues. Positions 621–768 (AATGSVSNSI…WFVYTSNTEI (148 aa)) are tail. The 112-residue stretch at 653 to 764 (NFQRFTRWYK…EVKSWFVYTS (112 aa)) folds into the LTD domain.

This sequence belongs to the intermediate filament family.

It localises to the cytoplasm. In terms of biological role, cytoplasmic intermediate filaments provide mechanical strength to cells. Not essential protein. The protein is Intermediate filament protein ifp-1 (ifp-1) of Caenorhabditis elegans.